Reading from the N-terminus, the 154-residue chain is Transcriptional repressor NrdR (154 aa).

The segment at 3–34 (CPFCGHAATQVIDTRMSEEGDTVRRRRRCESC) is a zinc-finger region. An ATP-cone domain is found at 49–139 (PAVVKKNGSR…VYRSFEDLAE (91 aa)).

The protein belongs to the NrdR family. It depends on Zn(2+) as a cofactor.

Its function is as follows. Negatively regulates transcription of bacterial ribonucleotide reductase nrd genes and operons by binding to NrdR-boxes. The sequence is that of Transcriptional repressor NrdR from Ralstonia pickettii (strain 12J).